The sequence spans 597 residues: Arginine--tRNA ligase (597 aa).

The 'HIGH' region signature appears at 138–148; it reads ANPTGPMHVGH.

The protein belongs to the class-I aminoacyl-tRNA synthetase family. In terms of assembly, monomer.

The protein resides in the cytoplasm. It carries out the reaction tRNA(Arg) + L-arginine + ATP = L-arginyl-tRNA(Arg) + AMP + diphosphate. This chain is Arginine--tRNA ligase, found in Rhodopseudomonas palustris (strain HaA2).